We begin with the raw amino-acid sequence, 264 residues long: Phosphatidylinositol transfer protein 1 (264 aa).

Residues 151-174 form a disordered region; it reads NYKETEDPTKIRSEKANRGPLEEE. Residues 238–264 adopt a coiled-coil conformation; the sequence is VRAFELKTKEDLKKKLEEKDENKAAEK.

This sequence belongs to the PtdIns transfer protein family. PI transfer class I subfamily. Post-translationally, phosphorylated in response to activation of rasG.

The protein resides in the cytoplasm. The protein localises to the golgi apparatus. In terms of biological role, catalyzes the transfer of PtdIns and phosphatidylcholine between membranes. The chain is Phosphatidylinositol transfer protein 1 (pitA) from Dictyostelium discoideum (Social amoeba).